The sequence spans 480 residues: CASP8 and FADD-like apoptosis regulator (480 aa).

2 DED domains span residues 1 to 73 (MSAE…RILK) and 92 to 170 (DYRV…KIQK). The interval 1–195 (MSAEVIHQVE…LQAAIQKSFK (195 aa)) is interaction with CASP8. The interval 1 to 227 (MSAEVIHQVE…GTQQEPVKKS (227 aa)) is interaction with FADD. Residues 1-305 (MSAEVIHQVE…FACMPEHRDY (305 aa)) form an interaction with CASP8 propeptide region. The interval 1-435 (MSAEVIHQVE…CLSQKLRQER (435 aa)) is not proteolytically processed and involved in apoptosis inhibition. An interaction with CASP3 region spans residues 192-435 (KSFKDPSNNF…CLSQKLRQER (244 aa)). The interaction with TRAF1 and TRAF2 stretch occupies residues 192–480 (KSFKDPSNNF…LRKKLIPSYT (289 aa)). Positions 217 to 480 (LGTQQEPVKK…LRKKLIPSYT (264 aa)) are interaction with CASP8 subunits p18 and p10. Residues 263–358 (ETELLRDTFT…AGKPKIFFIQ (96 aa)) are caspase. Positions 370-480 (SSLLEVDGPA…LRKKLIPSYT (111 aa)) are interaction with CASP8.

It belongs to the peptidase C14A family. TNFRSF6 stimulation triggers recruitment to the death-inducing signaling complex (DISC) formed by TNFRSF6, FADD and CASP8. A proteolytic fragment (p43) stays associated with the DISC. Interacts with RIPK1. Proteolytically processed by CASP8 generating subunit p43 and p12.

Its function is as follows. Apoptosis regulator protein which may function as a crucial link between cell survival and cell death pathways in mammalian cells. Acts as an inhibitor of TNFRSF6 mediated apoptosis. A proteolytic fragment (p43) is likely retained in the death-inducing signaling complex (DISC) thereby blocking further recruitment and processing of caspase-8 at the complex. Full length and shorter isoforms have been shown either to induce apoptosis or to reduce TNFRSF-triggered apoptosis. Lacks enzymatic (caspase) activity. This Pongo abelii (Sumatran orangutan) protein is CASP8 and FADD-like apoptosis regulator (CFLAR).